Consider the following 341-residue polypeptide: Methionine import ATP-binding protein MetN (341 aa).

The ABC transporter domain occupies 6-247; sequence IEIKKLSKNF…PQHQATRHLL (242 aa). 44-51 is a binding site for ATP; sequence GMSGAGKS.

Belongs to the ABC transporter superfamily. Methionine importer (TC 3.A.1.24) family. As to quaternary structure, the complex is composed of two ATP-binding proteins (MetN), two transmembrane proteins (MetI) and a solute-binding protein (MetQ).

It is found in the cell inner membrane. It catalyses the reaction L-methionine(out) + ATP + H2O = L-methionine(in) + ADP + phosphate + H(+). The enzyme catalyses D-methionine(out) + ATP + H2O = D-methionine(in) + ADP + phosphate + H(+). Part of the ABC transporter complex MetNIQ involved in methionine import. Responsible for energy coupling to the transport system. This chain is Methionine import ATP-binding protein MetN, found in Protochlamydia amoebophila (strain UWE25).